A 544-amino-acid polypeptide reads, in one-letter code: Chaperonin GroEL 2 (544 aa).

Residues 29–32 (TLGP), 86–90 (DGTTT), Gly413, and Asp495 contribute to the ATP site. Residues 525-544 (PEPKSNKPAGGGGGVDDYDY) form a disordered region. Gly residues predominate over residues 533 to 544 (AGGGGGVDDYDY).

This sequence belongs to the chaperonin (HSP60) family. Forms a cylinder of 14 subunits composed of two heptameric rings stacked back-to-back. Interacts with the co-chaperonin GroES.

It is found in the cytoplasm. It catalyses the reaction ATP + H2O + a folded polypeptide = ADP + phosphate + an unfolded polypeptide.. In terms of biological role, together with its co-chaperonin GroES, plays an essential role in assisting protein folding. The GroEL-GroES system forms a nano-cage that allows encapsulation of the non-native substrate proteins and provides a physical environment optimized to promote and accelerate protein folding. The sequence is that of Chaperonin GroEL 2 from Synechococcus sp. (strain JA-3-3Ab) (Cyanobacteria bacterium Yellowstone A-Prime).